We begin with the raw amino-acid sequence, 425 residues long: Meiotic recombination protein spo-11 (425 aa).

The segment at 1–38 is disordered; the sequence is MYEYSFNPNIDHEPGSVESQQSTIYSDSDDSDDSFLDD. Residues 15 to 158 form the Topo IIA-type catalytic domain; sequence GSVESQQSTI…LNILSCGRGI (144 aa). Positions 27-38 are enriched in acidic residues; sequence DSDDSDDSFLDD. Residue Tyr-119 is the O-(5'-phospho-DNA)-tyrosine intermediate of the active site. Residues Glu-202 and Asp-255 each contribute to the Mg(2+) site.

This sequence belongs to the TOP6A family. It depends on Mg(2+) as a cofactor.

Its subcellular location is the nucleus. It carries out the reaction ATP-dependent breakage, passage and rejoining of double-stranded DNA.. Functionally, required for meiotic recombination. Mediates DNA cleavage that forms the double-strand breaks (DSB) that initiate meiotic recombination. The polypeptide is Meiotic recombination protein spo-11 (spo-11) (Caenorhabditis elegans).